The primary structure comprises 310 residues: 4-hydroxyproline 2-epimerase (310 aa).

The active-site Proton acceptor is the Cys-88. Substrate contacts are provided by residues 89-90 (GH), His-208, and Asp-232. The active-site Proton donor is the Cys-236. 237 to 238 (GT) serves as a coordination point for substrate.

The protein belongs to the proline racemase family.

The catalysed reaction is trans-4-hydroxy-L-proline = cis-4-hydroxy-D-proline. In terms of biological role, catalyzes the epimerization of trans-4-hydroxy-L-proline (t4LHyp) to cis-4-hydroxy-D-proline (c4DHyp). Is likely involved in a degradation pathway that converts t4LHyp to alpha-ketoglutarate. Can also catalyze the dehydration of trans-3-hydroxy-L-proline (t3LHyp) to Delta(1)-pyrroline-2-carboxylate (Pyr2C), albeit with 42-fold lower efficiency. Displays no proline racemase activity. The polypeptide is 4-hydroxyproline 2-epimerase (Burkholderia thailandensis (strain ATCC 700388 / DSM 13276 / CCUG 48851 / CIP 106301 / E264)).